Here is a 55-residue protein sequence, read N- to C-terminus: Large ribosomal subunit protein bL32 (55 aa).

This sequence belongs to the bacterial ribosomal protein bL32 family.

The chain is Large ribosomal subunit protein bL32 from Aeromonas hydrophila subsp. hydrophila (strain ATCC 7966 / DSM 30187 / BCRC 13018 / CCUG 14551 / JCM 1027 / KCTC 2358 / NCIMB 9240 / NCTC 8049).